Consider the following 390-residue polypeptide: LIM/homeobox protein Lhx4 (390 aa).

LIM zinc-binding domains are found at residues 28–87 (PQCA…RFGT) and 88–150 (KCTA…AKQN). Positions 157–216 (AKRPRTTITAKQLETLKNAYKNSPKPARHVREQLSSETGLDMRVVQVWFQNRRAKEKRLK) form a DNA-binding region, homeobox. Positions 161–181 (RTTITAKQLETLKNAYKNSPK) are interaction with DNA. The interval 199–211 (RVVQVWFQNRRAK) is interaction with 5-mCpG DNA. 2 disordered regions span residues 230–253 (SVKR…GVSD) and 356–390 (AGGP…HPPF).

It is found in the nucleus. In terms of biological role, may play a critical role in the development of respiratory control mechanisms and in the normal growth and maturation of the lung. Binds preferentially to methylated DNA. This Homo sapiens (Human) protein is LIM/homeobox protein Lhx4 (LHX4).